The primary structure comprises 724 residues: Disks large homolog 4 (724 aa).

Residues Cys-3 and Cys-5 are each lipidated (S-palmitoyl cysteine). The tract at residues 15 to 35 (QDEDTPPLEHSPAHLPNQANS) is disordered. PDZ domains are found at residues 65–151 (EITL…VMRR) and 160–246 (EIKL…VAKP). Ser-73 and Ser-142 each carry phosphoserine. Phosphotyrosine is present on Tyr-240. Ser-295 bears the Phosphoserine mark. In terms of domain architecture, PDZ 3 spans 313 to 393 (RIVIHRGSTG…QTVTIIAQYK (81 aa)). A phosphoserine mark is found at Ser-415 and Ser-418. Thr-420 carries the phosphothreonine modification. Residues Ser-422, Ser-425, Ser-449, and Ser-480 each carry the phosphoserine modification. An SH3 domain is found at 428–498 (KRGFYIRALF…PSKRRVERRE (71 aa)). The 176-residue stretch at 534 to 709 (ARPIIILGPT…IYHKVKRVIE (176 aa)) folds into the Guanylate kinase-like domain. A Phosphotyrosine modification is found at Tyr-580. Residues Ser-606 and Ser-654 each carry the phosphoserine modification. Phosphotyrosine is present on Tyr-715.

Belongs to the MAGUK family. As to quaternary structure, interacts through its PDZ domains with ANO2 and NETO1. Interacts through its first two PDZ domains with GRIN2A, GRIN2B, GRIN2C, GRIN2D. Interacts with ASIC3. Interacts with SEMA4C. Interacts with CXADR. Interacts with KCND2. Interacts with SYNGAP1. Interacts with LRRC4 and LRRC4B. Interacts with ERBB4. Interacts with KCNA1, KCNA2, KCNA3 and KCNA4. Interacts through its first PDZ domain with GRIK2, KCNA4 and CRIPT. Interacts through its second PDZ domain with the PDZ domain of NOS1 or the C-terminus of CAPON. Interacts through its third PDZ domain with NLGN1 and CRIPT, and probably with NLGN2 and NLGN3. Interacts through its guanylate kinase-like domain with KIF13B. Interacts through its guanylate kinase-like domain with DLGAP1/GKAP, DLGAP2, DLGAP3, DLGAP4, MAP1A, BEGAIN and SIPA1L1. Isoform 2 interacts through an L27 domain with HGS/HRS and the first L27 domain of CASK. Interacts with ADR1B and ANKS1B. May interact with HTR2A. Interacts with ADAM22. Interacts with KLHL17 and LGI1. Interacts with FRMPD4 (via C-terminus). Interacts with LRFN1, LRFN2 and LRFN4. Interacts (via N-terminal tandem pair of PDZ domains) with GPER1 (via C-terminus tail motif); the interaction is direct and induces the increase of GPER1 protein levels residing at the plasma membrane surface in a estradiol-independent manner. Interacts (via N-terminus tandem pair of PDZ domains) with NOS1 (via N-terminal domain). Interacts with SHANK3. Interacts with KCNJ4. Interacts with GPR85. Interacts with CACNG2 and MPP2 (via the SH3-Guanylate kinase-like sub-module). Interacts with ADGRB1. Found in a complex with PRR7 and GRIN1. Interacts (via PDZ3 domain and to lesser degree via PDZ2 domain) with PRR7. Component of the postsynaptic hippocampal AMPA-type glutamate receptor (AMPAR) complex, at least composed of pore forming AMPAR subunits GRIA1, GRIA2 and GRIA3 and AMPAR auxiliary proteins SHISA6 and SHISA7. Interacts (via its first two PDZ domains) with SHISA6 and SHISA7 (via PDZ-binding motif); the interaction is direct. Interacts with RPH3A and GRIN2A; this ternary complex regulates NMDA receptor composition at postsynaptic membranes. Interacts with ABR and BCR. Interacts with DGKI (via PDZ-binding motif); controls the localization of DGKI to the synapse. Interacts with C9orf72, SMCR8 and RAB39B. Interacts with ZDHHC5. Interacts with PTEN (via PDZ domain-binding motif); the interaction is induced by NMDA and is required for PTEN location at postsynaptic density. Found in a complex with GRIA1, GRIA2, GRIA3, GRIA4, CACNG8 and CNIH2. Interacts with FAM81A; the interaction facilitates condensate formation via liquid-liquid phase separation. Interacts with ADGRL3. Interacts with SORCS3. Palmitoylated. Palmitoylation is required for targeting to postsynaptic density, plasma membrane and synapses. Palmitoylation by ZDHHC2 occurs when the synaptic activity decreases and induces DLG4 synaptic clustering. Palmitoylation by ZDHHC15 regulates trafficking to the postsynaptic density and function in synaptogenesis. Palmitoylation may play a role in glutamate receptor GRIA1 synapse clustering. Depalmitoylated by ABHD17A and ABHD17B and to a lesser extent by ABHD17C, ABHD12, ABHD13, LYPLA1 and LYPLA2. Undergoes rapid synaptic palmitoylation/depalmitoylation cycles during neuronal development which slow down in mature neurons. Post-translationally, ubiquitinated by MDM2 in response to NMDA receptor activation, leading to proteasome-mediated degradation of DLG4 which is required for AMPA receptor endocytosis. As to expression, brain.

It localises to the cell membrane. The protein localises to the postsynaptic density. Its subcellular location is the synapse. The protein resides in the cytoplasm. It is found in the cell projection. It localises to the axon. The protein localises to the dendritic spine. Its subcellular location is the dendrite. The protein resides in the presynapse. In terms of biological role, postsynaptic scaffolding protein that plays a critical role in synaptogenesis and synaptic plasticity by providing a platform for the postsynaptic clustering of crucial synaptic proteins. Interacts with the cytoplasmic tail of NMDA receptor subunits and shaker-type potassium channels. Required for synaptic plasticity associated with NMDA receptor signaling. Overexpression or depletion of DLG4 changes the ratio of excitatory to inhibitory synapses in hippocampal neurons. May reduce the amplitude of ASIC3 acid-evoked currents by retaining the channel intracellularly. May regulate the intracellular trafficking of ADR1B. Also regulates AMPA-type glutamate receptor (AMPAR) immobilization at postsynaptic density keeping the channels in an activated state in the presence of glutamate and preventing synaptic depression. Under basal conditions, cooperates with FYN to stabilize palmitoyltransferase ZDHHC5 at the synaptic membrane through FYN-mediated phosphorylation of ZDHHC5 and its subsequent inhibition of association with endocytic proteins. The chain is Disks large homolog 4 from Homo sapiens (Human).